A 261-amino-acid chain; its full sequence is MSRRRGPRRRGPRRRPRPGAPAVPRPGAPAVPRPGALPTADSQMVPAYDSGTAVESAPAASSLLRRWLLVPQADDSDDADYAGNDDAEWANSPPSEGGGKAPEAPHAAPAAACPPPPPRKERGPQRPLPPHLALRLRTTTEYLARLSLRRRRPPASPPADAPRGKVCFSPRVQVRHLVAWETAARLARRGSWARERADRDRFRRRVAAAEAVIGPCLEPEARARARARARAHEDGGPAEEEEAAAAARGSSAAAGPGRRAV.

Basic residues predominate over residues 1-17 (MSRRRGPRRRGPRRRPR). Residues 1 to 19 (MSRRRGPRRRGPRRRPRPG) are required for nucleolar localization. Disordered stretches follow at residues 1–59 (MSRR…SAPA), 75–135 (DSDD…LALR), and 145–164 (RLSL…APRG). 4 consecutive repeats follow at residues 3-7 (RRRGP), 8-12 (RRRGP), 16-23 (PRPGAPAV), and 24-31 (PRPGAPAV). The tract at residues 3–12 (RRRGPRRRGP) is 2 X 5 AA tandem repeats of R-R-R-G-P. The interval 16–31 (PRPGAPAVPRPGAPAV) is 2 X 8 AA tandem repeats of P-R-P-G-A-P-A-V. Positions 18–32 (PGAPAVPRPGAPAVP) are enriched in pro residues. Positions 75 to 88 (DSDDADYAGNDDAE) are enriched in acidic residues. Residues 101–111 (APEAPHAAPAA) are compositionally biased toward low complexity. A Nuclear export signal motif is present at residues 128–137 (LPPHLALRLR). The binding to PP1CA stretch occupies residues 163 to 176 (RGKVCFSPRVQVRH). The interaction with host PPP1CA stretch occupies residues 163–176 (RGKVCFSPRVQVRH). An important for interferon resistance region spans residues 178–261 (VAWETAARLA…AAAGPGRRAV (84 aa)). The short motif at 188–206 (RRGSWARERADRDRFRRRV) is the Bipartite nuclear localization signal element. Positions 206–221 (VAAAEAVIGPCLEPEA) are interaction with host EIF2S1/EIF-2ALPHA. The segment at 223–261 (ARARARARAHEDGGPAEEEEAAAAARGSSAAAGPGRRAV) is disordered. The span at 244–261 (AAAARGSSAAAGPGRRAV) shows a compositional bias: low complexity.

The protein belongs to the PPP1R15 family. Interacts with host PPP1CA to form a high-molecular-weight complex that dephosphorylates EIF2S1/eIF-2alpha. Interacts with host EIF2S1/eIF-2alpha; this interaction is crucial for the specific dephosphorylation of EIF2S1/eIF-2alpha by PPP1CA.

It is found in the host cytoplasm. The protein resides in the host nucleus. Its subcellular location is the host nucleolus. It localises to the virion. In terms of biological role, plays essential roles in viral nuclear egress to mediate capsid transit across the nuclear membrane and also in the inhibition of host immune response and integrated stress response (ISR). Facilitates nuclear egress cooperatively with host C1QBP and protein kinase C/PKC to induce lamin A/C phosphorylation and subsequent reorganization. In turn, lamina disassembles and nuclear egress occurs. Recruits the serine/threonine-protein phosphatase PPP1CA/PP1-alpha to dephosphorylate the translation initiation factor EIF2S1/eIF-2alpha, thereby couteracting the host shutoff of protein synthesis involving double-stranded RNA-dependent protein kinase EIF2AK2/PKR. Also down-modulates the host MHC class II proteins cell surface expression. Acts as a neurovirulence factor that has a profound effect on the growth of the virus in central nervous system tissue, probably through its ability to maintain an environment favorable for viral replication. The sequence is that of Neurovirulence factor ICP34.5 (RL1) from Human herpesvirus 2 (strain HG52) (HHV-2).